The primary structure comprises 129 residues: Prefoldin subunit 6 (129 aa).

Coiled-coil stretches lie at residues 6–26 and 84–118; these read VRDL…IQKD and IEYI…LQQR.

It belongs to the prefoldin subunit beta family. As to quaternary structure, heterohexamer of two PFD-alpha type and four PFD-beta type subunits forming prefoldin co-chaperone complex. Interacts with PFD2, PFD3, PFD4 and PFD5. Interacts with LSM8, a specific subunit of the LSM2-8 complex, which is a core component of the spliceosome. Binds to HSP90 to facilitate the formation of a larger complex made at least of HSP90, PFD6 and LSM8.

The protein resides in the cytoplasm. Its subcellular location is the nucleus. Functionally, binds specifically to cytosolic chaperonin (c-CPN) and transfers target proteins to it. Binds to nascent polypeptide chain and promotes folding in an environment in which there are many competing pathways for nonnative proteins. Together with other chaperonins, contribute to the regulation of gene expression by modulating the spliceosome function on pre-mRNA splicing post-transcriptionally by acting as a co-chaperone of Hsp90 to control levels of LSM8. Required for the biogenesis of tubulins and for subsequent microtubules (MTs) organization and dynamicity, but unable to associate with microtubules. Involved in the process leading to microtubules dissociation in response to gibberellic acid (GA) probably due to the DELLA proteins-mediated translocation of the prefoldin co-chaperone complex from the cytoplasm to the nucleus. Contributes to the GA-dependent regulation of PIN2 trafficking at the plasma membrane, thus influencing auxin flux. The sequence is that of Prefoldin subunit 6 from Arabidopsis thaliana (Mouse-ear cress).